A 666-amino-acid polypeptide reads, in one-letter code: Protein OPG074 (666 aa).

The chain crosses the membrane as a helical span at residues 574–596 (VVIFFNTIIEYIVATIYYRLAVL).

The protein belongs to the orthopoxvirus OPG074 family.

The protein resides in the membrane. The sequence is that of Protein OPG074 (OPG074) from Homo sapiens (Human).